Reading from the N-terminus, the 1072-residue chain is Guanylyl cyclase C (1072 aa).

An N-terminal signal peptide occupies residues 1 to 19 (MTSLLGLAVRLLLFQPALM). Residues 20–433 (VFWASQVRQN…VPGLGPQILM (414 aa)) are Extracellular-facing. Residues Asn32, Asn75, Asn79, Asn179, Asn188, Asn195, Asn284, Asn307, Asn345, and Asn402 are each glycosylated (N-linked (GlcNAc...) asparagine). The chain crosses the membrane as a helical span at residues 434-454 (IAVFTLTGILVVLLLIALLVL). At 455-1072 (RKYRRDHALR…NNSDHDSTYF (618 aa)) the chain is on the cytoplasmic side. In terms of domain architecture, Protein kinase spans 489 to 748 (LKIDDDRRRD…KIESTLAKIF (260 aa)). The region spanning 823-953 (TIYFSDIVGF…DTVNTASRME (131 aa)) is the Guanylate cyclase domain.

The protein belongs to the adenylyl cyclase class-4/guanylyl cyclase family. In terms of assembly, homotrimer. Interacts via its C-terminal region with NHERF4. Interacts with the lectin chaperone VIP36. In terms of processing, glycosylation at Asn-75 and/or Asn-79 is required for interaction with VIP36 while glycosylation at Asn-345 and Asn-402 modulates ligand-mediated GC-C activation.

The protein localises to the cell membrane. The protein resides in the endoplasmic reticulum membrane. The catalysed reaction is GTP = 3',5'-cyclic GMP + diphosphate. Its function is as follows. Guanylyl cyclase that catalyzes synthesis of cyclic GMP (cGMP) from GTP. This chain is Guanylyl cyclase C (Gucy2c), found in Mus musculus (Mouse).